Here is a 600-residue protein sequence, read N- to C-terminus: Sulfite reductase [NADPH] flavoprotein alpha-component (600 aa).

The Flavodoxin-like domain maps to 63-201; sequence ITLISASQTG…AAQAWRQRVV (139 aa). Residues 69 to 74, 116 to 119, and 152 to 161 contribute to the FMN site; these read SQTGNA, STQG, and LGDTSYEHFC. Residues 235–449 enclose the FAD-binding FR-type domain; sequence ESPLTATLSV…IEHNDNFRLP (215 aa). Residues Thr-323, Ala-357, 387–390, 405–407, and 420–423 contribute to the FAD site; these read RLYS, TVG, and GGAS. NADP(+) is bound by residues 520–521, 526–530, and Asp-562; these read SR and KIYVQ. FAD is bound at residue Tyr-600.

It belongs to the NADPH-dependent sulphite reductase flavoprotein subunit CysJ family. In the N-terminal section; belongs to the flavodoxin family. This sequence in the C-terminal section; belongs to the flavoprotein pyridine nucleotide cytochrome reductase family. In terms of assembly, alpha(8)-beta(8). The alpha component is a flavoprotein, the beta component is a hemoprotein. FAD serves as cofactor. It depends on FMN as a cofactor.

It carries out the reaction hydrogen sulfide + 3 NADP(+) + 3 H2O = sulfite + 3 NADPH + 4 H(+). Its pathway is sulfur metabolism; hydrogen sulfide biosynthesis; hydrogen sulfide from sulfite (NADPH route): step 1/1. Functionally, component of the sulfite reductase complex that catalyzes the 6-electron reduction of sulfite to sulfide. This is one of several activities required for the biosynthesis of L-cysteine from sulfate. The flavoprotein component catalyzes the electron flow from NADPH -&gt; FAD -&gt; FMN to the hemoprotein component. The protein is Sulfite reductase [NADPH] flavoprotein alpha-component of Cronobacter sakazakii (strain ATCC BAA-894) (Enterobacter sakazakii).